The primary structure comprises 119 residues: uncharacterized protein (119 aa).

Residues 1-20 form a disordered region; it reads MPHLAAEAHTWPPHISHSTL. The helical transmembrane segment at 74–94 threads the bilayer; that stretch reads LLFVVHQGHIGTGLIVFIICW.

It localises to the membrane. This is an uncharacterized protein from Saccharomyces cerevisiae (strain ATCC 204508 / S288c) (Baker's yeast).